The following is a 708-amino-acid chain: Pre-mRNA-splicing factor SPP382 (708 aa).

Residues 61–108 (TYGIGAKLLSSMGYVAGKGLGKDGSGITTPIETQSRPMHNAGLGMFSN) enclose the G-patch domain.

As to quaternary structure, component of the NTR complex (NTC-related complex), composed of NTR1, NTR2 and PRP43. Interacts with CLF1 and NTR2. Interacts with PRP43 and PRP45.

The protein localises to the cytoplasm. The protein resides in the nucleus. Its function is as follows. Involved in pre-mRNA splicing and spliceosome disassembly. Promotes release of excised lariat intron from the spliceosome by acting as a receptor for PRP43. This targeting of PRP43 leads to disassembly of the spliceosome with the separation of the U2, U5, U6 snRNPs and the NTC complex. This chain is Pre-mRNA-splicing factor SPP382 (SPP382), found in Saccharomyces cerevisiae (strain ATCC 204508 / S288c) (Baker's yeast).